A 342-amino-acid polypeptide reads, in one-letter code: S-adenosyl-L-methionine-dependent tRNA 4-demethylwyosine synthase (342 aa).

6 residues coordinate [4Fe-4S] cluster: cysteine 45, cysteine 58, cysteine 71, cysteine 81, cysteine 85, and cysteine 88. A Radical SAM core domain is found at 64 to 312; the sequence is YGIHSHRCLQ…VKHLPGYHIE (249 aa).

The protein belongs to the TYW1 family. In terms of assembly, monomer. [4Fe-4S] cluster serves as cofactor.

Its subcellular location is the cytoplasm. The enzyme catalyses N(1)-methylguanosine(37) in tRNA(Phe) + pyruvate + S-adenosyl-L-methionine = 4-demethylwyosine(37) in tRNA(Phe) + 5'-deoxyadenosine + L-methionine + CO2 + H2O. Its function is as follows. Component of the wyosine derivatives biosynthesis pathway that catalyzes the condensation of N-methylguanine with 2 carbon atoms from pyruvate to form the tricyclic 4-demethylwyosine (imG-14) on guanosine-37 of tRNA(Phe). The protein is S-adenosyl-L-methionine-dependent tRNA 4-demethylwyosine synthase of Pyrococcus abyssi (strain GE5 / Orsay).